A 128-amino-acid chain; its full sequence is Disintegrin EO4A (128 aa).

The signal sequence occupies residues 1–20; that stretch reads MIPVLLVTICLAVFPFQGSS. A propeptide spanning residues 21 to 47 is cleaved from the precursor; it reads IILESGNINDYEIVYPKKVNVLPTGAM. Residues 26–112 form the Disintegrin domain; it reads GNINDYEIVY…DCPRNPYKGK (87 aa). 4 disulfide bridges follow: cysteine 53–cysteine 76, cysteine 67–cysteine 73, cysteine 72–cysteine 97, and cysteine 85–cysteine 104. The Cell attachment site motif lies at 89-91; the sequence is RGD. Positions 115 to 128 are excised as a propeptide; that stretch reads PMKWPAAAKGSVLM.

It belongs to the disintegrin family. Dimeric disintegrin subfamily. As to quaternary structure, heterodimer with EO5B; disulfide-linked. In terms of tissue distribution, expressed by the venom gland.

The protein localises to the secreted. Functionally, poor inhibitor of platelet aggregation. The disintegrin inhibits the adhesion of cells expressing the RGD-dependent integrin alpha-5/beta-1 (ITGA5/ITGB1) to immobilized fibronectin. Inhibition on alpha-2b/beta-3 (ITGA2B/ITGB3) is low. The chain is Disintegrin EO4A from Echis ocellatus (Ocellated saw-scaled viper).